The sequence spans 215 residues: MOB kinase activator-like 1B (215 aa).

Residues 1–25 form a disordered region; that stretch reads MSLFGLGRNQKTFRPKKSAPSGTKG. Residues Cys79, Cys84, His161, and His166 each contribute to the Zn(2+) site.

This sequence belongs to the MOB1/phocein family. Interacts with SIK1. In terms of tissue distribution, expression is detected along the vasculature in cotyledons, hypocotyls and roots of 3- to 4-day-old seedlings.

This Arabidopsis thaliana (Mouse-ear cress) protein is MOB kinase activator-like 1B.